A 32-amino-acid chain; its full sequence is Photosystem I reaction center subunit XII (32 aa).

The chain crosses the membrane as a helical span at residues 9–31 (VYVALVSALITSFLAVRLGLALY).

The protein belongs to the PsaM family.

The protein localises to the plastid. It is found in the chloroplast thylakoid membrane. The sequence is that of Photosystem I reaction center subunit XII from Chaetosphaeridium globosum (Charophycean green alga).